Reading from the N-terminus, the 421-residue chain is Histidine--tRNA ligase (421 aa).

Belongs to the class-II aminoacyl-tRNA synthetase family. As to quaternary structure, homodimer.

Its subcellular location is the cytoplasm. The enzyme catalyses tRNA(His) + L-histidine + ATP = L-histidyl-tRNA(His) + AMP + diphosphate + H(+). This is Histidine--tRNA ligase from Thermus thermophilus (strain ATCC BAA-163 / DSM 7039 / HB27).